The sequence spans 146 residues: Universal stress protein A homolog 2 (146 aa).

The protein belongs to the universal stress protein A family. Homodimer.

Its subcellular location is the cytoplasm. In terms of biological role, involved in stress response. The chain is Universal stress protein A homolog 2 (uspA2) from Coxiella burnetii (strain RSA 493 / Nine Mile phase I).